The following is a 312-amino-acid chain: Glycine--tRNA ligase alpha subunit (312 aa).

This sequence belongs to the class-II aminoacyl-tRNA synthetase family. Tetramer of two alpha and two beta subunits.

It localises to the cytoplasm. It carries out the reaction tRNA(Gly) + glycine + ATP = glycyl-tRNA(Gly) + AMP + diphosphate. The sequence is that of Glycine--tRNA ligase alpha subunit from Delftia acidovorans (strain DSM 14801 / SPH-1).